The primary structure comprises 425 residues: Elongation factor 1-alpha (425 aa).

The tr-type G domain maps to 5–221 (KPHMNLAVIG…DTFKEPSKPT (217 aa)). Positions 14–21 (GHIDHGKS) are G1. Residue 14-21 (GHIDHGKS) participates in GTP binding. Serine 21 serves as a coordination point for Mg(2+). The tract at residues 70–74 (GITID) is G2. The interval 91–94 (DCPG) is G3. Residues 91 to 95 (DCPGH) and 146 to 149 (NKMD) contribute to the GTP site. Positions 146 to 149 (NKMD) are G4. The G5 stretch occupies residues 185–187 (SSL).

This sequence belongs to the TRAFAC class translation factor GTPase superfamily. Classic translation factor GTPase family. EF-Tu/EF-1A subfamily.

The protein resides in the cytoplasm. The enzyme catalyses GTP + H2O = GDP + phosphate + H(+). GTP hydrolase that promotes the GTP-dependent binding of aminoacyl-tRNA to the A-site of ribosomes during protein biosynthesis. This Methanoregula boonei (strain DSM 21154 / JCM 14090 / 6A8) protein is Elongation factor 1-alpha.